The primary structure comprises 166 residues: RNA pyrophosphohydrolase (166 aa).

The region spanning 6–149 (GFRPNVGIIL…KRDVYRKAMM (144 aa)) is the Nudix hydrolase domain. A Nudix box motif is present at residues 38-59 (GGIHFGETPEQALYRELREEVG).

It belongs to the Nudix hydrolase family. RppH subfamily. The cofactor is a divalent metal cation.

Accelerates the degradation of transcripts by removing pyrophosphate from the 5'-end of triphosphorylated RNA, leading to a more labile monophosphorylated state that can stimulate subsequent ribonuclease cleavage. The sequence is that of RNA pyrophosphohydrolase from Acinetobacter baylyi (strain ATCC 33305 / BD413 / ADP1).